Reading from the N-terminus, the 850-residue chain is Envelope glycoprotein gp160 (850 aa).

Residues 1–28 form the signal peptide; it reads METQTSWLSLWRWGLMIFGMLMICSARE. At 29 to 678 the chain is on the extracellular side; sequence NLWVTVYYGV…ISNWLWYIKI (650 aa). Cys-50 and Cys-70 are oxidised to a cystine. N-linked (GlcNAc...) asparagine; by host glycans are attached at residues Asn-84, Asn-126, Asn-133, Asn-134, Asn-139, Asn-152, Asn-156, Asn-184, Asn-193, Asn-226, Asn-230, Asn-237, Asn-258, Asn-272, Asn-285, Asn-297, Asn-327, Asn-334, and Asn-349. 5 disulfide bridges follow: Cys-115–Cys-201, Cys-122–Cys-192, Cys-127–Cys-153, Cys-214–Cys-243, and Cys-224–Cys-235. A V1 region spans residues 127–152; sequence CSDVNSNNSTDSNSSASNNSPEIMKN. Positions 153-192 are V2; sequence CSFNVTTEIRNKRKQEYALFYRQDVVPINSDNKSYILINC. Residues 292–325 are V3; the sequence is CTRPNNNTRKGIHMGPGQVLYATGEIIGDIRKAY. Cys-292 and Cys-326 are joined by a disulfide. Residues 357–367 are CD4-binding loop; sequence PSGGDIEITTH. Disulfide bonds link Cys-371–Cys-436 and Cys-378–Cys-409. Positions 378 to 409 are V4; sequence CNTSTLFNSSWDENNIKDTNSTNDNTTITIPC. Asn-379, Asn-385, Asn-397, Asn-402, Asn-433, Asn-439, Asn-453, and Asn-457 each carry an N-linked (GlcNAc...) asparagine; by host glycan. The segment at 447-467 is disordered; that stretch reads RDGGNRNGSENGTETFRPTGG. Over residues 453–462 the composition is skewed to polar residues; the sequence is NGSENGTETF. 2 V5 regions span residues 453 to 465 and 454 to 465; these read NGSENGTETFRPT and GSENGTETFRPT. The segment at 506-526 is fusion peptide; sequence AVGIGAVFLGFLGTAGSTMGA. Residues 568-586 are immunosuppression; it reads KQLQARVLAVERYLKDQQL. Cys-592 and Cys-598 are disulfide-bonded. Residues Asn-605, Asn-610, Asn-619, Asn-631, and Asn-668 are each glycosylated (N-linked (GlcNAc...) asparagine; by host). Residues 627–661 are a coiled coil; sequence REINNYTGIIYSLIEEAQNQQETNEKDLLALDKWT. The MPER; binding to GalCer stretch occupies residues 656-677; the sequence is ALDKWTNLWNWFNISNWLWYIK. A helical membrane pass occupies residues 679 to 699; the sequence is FIMIIGGLIGLRIIFAVLAIV. Residues 700 to 850 are Cytoplasmic-facing; that stretch reads NRVRQGYSPL…IRQGLERALL (151 aa). Positions 706–709 match the YXXL motif; contains endocytosis signal motif; sequence YSPL. Cys-758 carries S-palmitoyl cysteine; by host lipidation. The short motif at 849-850 is the Di-leucine internalization motif element; the sequence is LL.

It belongs to the HIV-1 env protein family. The mature envelope protein (Env) consists of a homotrimer of non-covalently associated gp120-gp41 heterodimers. The resulting complex protrudes from the virus surface as a spike. There seems to be as few as 10 spikes on the average virion. Interacts with host CD4, CCR5 and CXCR4. Gp120 also interacts with the C-type lectins CD209/DC-SIGN and CLEC4M/DC-SIGNR (collectively referred to as DC-SIGN(R)). Gp120 and gp41 interact with GalCer. Gp120 interacts with host ITGA4/ITGB7 complex; on CD4+ T-cells, this interaction results in rapid activation of integrin ITGAL/LFA-1, which facilitates efficient cell-to-cell spreading of HIV-1. Gp120 interacts with cell-associated heparan sulfate; this interaction increases virus infectivity on permissive cells and may be involved in infection of CD4- cells. As to quaternary structure, the mature envelope protein (Env) consists of a homotrimer of non-covalently associated gp120-gp41 heterodimers. The resulting complex protrudes from the virus surface as a spike. There seems to be as few as 10 spikes on the average virion. Post-translationally, highly glycosylated by host. The high number of glycan on the protein is reffered to as 'glycan shield' because it contributes to hide protein sequence from adaptive immune system. In terms of processing, palmitoylation of the transmembrane protein and of Env polyprotein (prior to its proteolytic cleavage) is essential for their association with host cell membrane lipid rafts. Palmitoylation is therefore required for envelope trafficking to classical lipid rafts, but not for viral replication. Specific enzymatic cleavages in vivo yield mature proteins. Envelope glycoproteins are synthesized as an inactive precursor that is heavily N-glycosylated and processed likely by host cell furin in the Golgi to yield the mature SU and TM proteins. The cleavage site between SU and TM requires the minimal sequence [KR]-X-[KR]-R. About 2 of the 9 disulfide bonds of gp41 are reduced by P4HB/PDI, following binding to CD4 receptor.

The protein resides in the virion membrane. The protein localises to the host cell membrane. It is found in the host endosome membrane. Functionally, oligomerizes in the host endoplasmic reticulum into predominantly trimers. In a second time, gp160 transits in the host Golgi, where glycosylation is completed. The precursor is then proteolytically cleaved in the trans-Golgi and thereby activated by cellular furin or furin-like proteases to produce gp120 and gp41. In terms of biological role, attaches the virus to the host lymphoid cell by binding to the primary receptor CD4. This interaction induces a structural rearrangement creating a high affinity binding site for a chemokine coreceptor like CXCR4 and/or CCR5. Acts as a ligand for CD209/DC-SIGN and CLEC4M/DC-SIGNR, which are respectively found on dendritic cells (DCs), and on endothelial cells of liver sinusoids and lymph node sinuses. These interactions allow capture of viral particles at mucosal surfaces by these cells and subsequent transmission to permissive cells. HIV subverts the migration properties of dendritic cells to gain access to CD4+ T-cells in lymph nodes. Virus transmission to permissive T-cells occurs either in trans (without DCs infection, through viral capture and transmission), or in cis (following DCs productive infection, through the usual CD4-gp120 interaction), thereby inducing a robust infection. In trans infection, bound virions remain infectious over days and it is proposed that they are not degraded, but protected in non-lysosomal acidic organelles within the DCs close to the cell membrane thus contributing to the viral infectious potential during DCs' migration from the periphery to the lymphoid tissues. On arrival at lymphoid tissues, intact virions recycle back to DCs' cell surface allowing virus transmission to CD4+ T-cells. Its function is as follows. Acts as a class I viral fusion protein. Under the current model, the protein has at least 3 conformational states: pre-fusion native state, pre-hairpin intermediate state, and post-fusion hairpin state. During fusion of viral and target intracellular membranes, the coiled coil regions (heptad repeats) assume a trimer-of-hairpins structure, positioning the fusion peptide in close proximity to the C-terminal region of the ectodomain. The formation of this structure appears to drive apposition and subsequent fusion of viral and target cell membranes. Complete fusion occurs in host cell endosomes and is dynamin-dependent, however some lipid transfer might occur at the plasma membrane. The virus undergoes clathrin-dependent internalization long before endosomal fusion, thus minimizing the surface exposure of conserved viral epitopes during fusion and reducing the efficacy of inhibitors targeting these epitopes. Membranes fusion leads to delivery of the nucleocapsid into the cytoplasm. The protein is Envelope glycoprotein gp160 of Human immunodeficiency virus type 1 group M subtype J (isolate SE9173) (HIV-1).